The primary structure comprises 328 residues: Phosphate acyltransferase (328 aa).

It belongs to the PlsX family. As to quaternary structure, homodimer. Probably interacts with PlsY.

The protein localises to the cytoplasm. The catalysed reaction is a fatty acyl-[ACP] + phosphate = an acyl phosphate + holo-[ACP]. It participates in lipid metabolism; phospholipid metabolism. In terms of biological role, catalyzes the reversible formation of acyl-phosphate (acyl-PO(4)) from acyl-[acyl-carrier-protein] (acyl-ACP). This enzyme utilizes acyl-ACP as fatty acyl donor, but not acyl-CoA. The sequence is that of Phosphate acyltransferase from Campylobacter jejuni subsp. jejuni serotype O:6 (strain 81116 / NCTC 11828).